Consider the following 287-residue polypeptide: Genetic interactor of prohibitin 7, mitochondrial (287 aa).

A mitochondrion-targeting transit peptide spans 1–24 (MVLSNVKIFRLKSHRAFRIGPMIK). The helical transmembrane segment at 250 to 266 (SKAIISFVVFVSIYVWL) threads the bilayer.

Belongs to the GEP7 family.

The protein resides in the mitochondrion membrane. Involved in respiratory growth and required for cell survival in the absence of prohibitins or GEM1. The chain is Genetic interactor of prohibitin 7, mitochondrial (GEP7) from Saccharomyces cerevisiae (strain YJM789) (Baker's yeast).